The following is a 614-amino-acid chain: Elongation factor 4 (614 aa).

In terms of domain architecture, tr-type G spans 10–192 (ALIRNFCIIA…EIVARIPPPV (183 aa)). GTP-binding positions include 22–27 (DHGKST) and 139–142 (NKID).

It belongs to the TRAFAC class translation factor GTPase superfamily. Classic translation factor GTPase family. LepA subfamily.

Its subcellular location is the cell membrane. The catalysed reaction is GTP + H2O = GDP + phosphate + H(+). In terms of biological role, required for accurate and efficient protein synthesis under certain stress conditions. May act as a fidelity factor of the translation reaction, by catalyzing a one-codon backward translocation of tRNAs on improperly translocated ribosomes. Back-translocation proceeds from a post-translocation (POST) complex to a pre-translocation (PRE) complex, thus giving elongation factor G a second chance to translocate the tRNAs correctly. Binds to ribosomes in a GTP-dependent manner. This chain is Elongation factor 4, found in Thermobifida fusca (strain YX).